A 227-amino-acid chain; its full sequence is 2-C-methyl-D-erythritol 4-phosphate cytidylyltransferase (227 aa).

Belongs to the IspD/TarI cytidylyltransferase family. IspD subfamily.

It carries out the reaction 2-C-methyl-D-erythritol 4-phosphate + CTP + H(+) = 4-CDP-2-C-methyl-D-erythritol + diphosphate. Its pathway is isoprenoid biosynthesis; isopentenyl diphosphate biosynthesis via DXP pathway; isopentenyl diphosphate from 1-deoxy-D-xylulose 5-phosphate: step 2/6. Functionally, catalyzes the formation of 4-diphosphocytidyl-2-C-methyl-D-erythritol from CTP and 2-C-methyl-D-erythritol 4-phosphate (MEP). The polypeptide is 2-C-methyl-D-erythritol 4-phosphate cytidylyltransferase (Mycobacterium marinum (strain ATCC BAA-535 / M)).